We begin with the raw amino-acid sequence, 301 residues long: Probable aspartoacylase (301 aa).

Positions 13 and 16 each coordinate Zn(2+). Substrate is bound by residues R54 and N61–R62. H105 serves as a coordination point for Zn(2+). The substrate site is built by E163 and Y273.

This sequence belongs to the AspA/AstE family. Aspartoacylase subfamily. It depends on Zn(2+) as a cofactor.

It catalyses the reaction an N-acyl-L-aspartate + H2O = a carboxylate + L-aspartate. The sequence is that of Probable aspartoacylase from Prochlorococcus marinus (strain MIT 9215).